Reading from the N-terminus, the 484-residue chain is Glutamate--tRNA ligase (484 aa).

Positions 9 to 19 match the 'HIGH' region motif; the sequence is PSPTGNLHIGT. 4 residues coordinate Zn(2+): C98, C100, H125, and H127. Residues 250–254 carry the 'KMSKS' region motif; sequence KLSKR. K253 lines the ATP pocket.

Belongs to the class-I aminoacyl-tRNA synthetase family. Glutamate--tRNA ligase type 1 subfamily. As to quaternary structure, monomer. Zn(2+) is required as a cofactor.

It localises to the cytoplasm. It carries out the reaction tRNA(Glu) + L-glutamate + ATP = L-glutamyl-tRNA(Glu) + AMP + diphosphate. Its function is as follows. Catalyzes the attachment of glutamate to tRNA(Glu) in a two-step reaction: glutamate is first activated by ATP to form Glu-AMP and then transferred to the acceptor end of tRNA(Glu). The sequence is that of Glutamate--tRNA ligase from Crocosphaera subtropica (strain ATCC 51142 / BH68) (Cyanothece sp. (strain ATCC 51142)).